The chain runs to 295 residues: 4-diphosphocytidyl-2-C-methyl-D-erythritol kinase (295 aa).

The active site involves lysine 18. An ATP-binding site is contributed by 101–111 (PMGGGIGGGSS). Aspartate 143 is a catalytic residue.

It belongs to the GHMP kinase family. IspE subfamily.

The enzyme catalyses 4-CDP-2-C-methyl-D-erythritol + ATP = 4-CDP-2-C-methyl-D-erythritol 2-phosphate + ADP + H(+). It functions in the pathway isoprenoid biosynthesis; isopentenyl diphosphate biosynthesis via DXP pathway; isopentenyl diphosphate from 1-deoxy-D-xylulose 5-phosphate: step 3/6. Functionally, catalyzes the phosphorylation of the position 2 hydroxy group of 4-diphosphocytidyl-2C-methyl-D-erythritol. This chain is 4-diphosphocytidyl-2-C-methyl-D-erythritol kinase, found in Vibrio vulnificus (strain YJ016).